A 159-amino-acid chain; its full sequence is NADH-quinone oxidoreductase subunit I (159 aa).

4Fe-4S ferredoxin-type domains follow at residues 50-80 and 90-119; these read QRRY…IESE and KRYD…ETHI. [4Fe-4S] cluster contacts are provided by Cys-60, Cys-63, Cys-66, Cys-70, Cys-99, Cys-102, Cys-105, and Cys-109.

Belongs to the complex I 23 kDa subunit family. In terms of assembly, NDH-1 is composed of 14 different subunits. Subunits NuoA, H, J, K, L, M, N constitute the membrane sector of the complex. Requires [4Fe-4S] cluster as cofactor.

It localises to the cell inner membrane. It catalyses the reaction a quinone + NADH + 5 H(+)(in) = a quinol + NAD(+) + 4 H(+)(out). In terms of biological role, NDH-1 shuttles electrons from NADH, via FMN and iron-sulfur (Fe-S) centers, to quinones in the respiratory chain. The immediate electron acceptor for the enzyme in this species is believed to be ubiquinone. Couples the redox reaction to proton translocation (for every two electrons transferred, four hydrogen ions are translocated across the cytoplasmic membrane), and thus conserves the redox energy in a proton gradient. In Neisseria meningitidis serogroup A / serotype 4A (strain DSM 15465 / Z2491), this protein is NADH-quinone oxidoreductase subunit I.